We begin with the raw amino-acid sequence, 352 residues long: Alpha-2-HS-glycoprotein (352 aa).

The signal sequence occupies residues 1–18 (MKSLVLLLCFAQLWSCQS). The 115-residue stretch at 19-133 (APQGAGLGFR…QFRVLHAQCH (115 aa)) folds into the Cystatin fetuin-A-type 1 domain. 6 disulfide bridges follow: Cys-32/Cys-343, Cys-89/Cys-100, Cys-114/Cys-132, Cys-146/Cys-149, Cys-208/Cys-219, and Cys-230/Cys-247. Residue Asn-99 is glycosylated (N-linked (GlcNAc...) asparagine). Ser-134 carries the post-translational modification Phosphoserine. Phosphothreonine is present on Thr-135. Ser-138 carries the post-translational modification Phosphoserine. Positions 144 to 250 (KFCPRCPILI…EEVSVACKLF (107 aa)) constitute a Cystatin fetuin-A-type 2 domain. 2 N-linked (GlcNAc...) asparagine glycosylation sites follow: Asn-156 and Asn-176. Residues 256 to 273 (PANANPAGPAPTVGQAAP) show a composition bias toward low complexity. The disordered stretch occupies residues 256–280 (PANANPAGPAPTVGQAAPVAPPAGP). Phosphoserine is present on residues Ser-309, Ser-313, Ser-316, and Ser-318. Positions 319–338 (GEVLHSPKVGQPGDAGAAGP) are disordered. Positions 328-338 (GQPGDAGAAGP) are enriched in low complexity.

This sequence belongs to the fetuin family. Undergoes complex post-translational modification involving N-glycosylation, and addition of fucose and sialic acid residues. Phosphorylation occurs at a serine residue. In terms of processing, phosphorylated by FAM20C in the extracellular medium. In terms of tissue distribution, synthesized in liver and secreted by the hepatocytes in the blood.

Its subcellular location is the secreted. In terms of biological role, could inhibit both insulin-receptor tyrosine kinase activity and insulin-stimulated receptor autophosphorylation and, concomitantly, antagonize the mitogenic effect of the hormone in cultured rat hepatoma cells. The chain is Alpha-2-HS-glycoprotein (Ahsg) from Rattus norvegicus (Rat).